We begin with the raw amino-acid sequence, 248 residues long: PF03932 family protein CutC (248 aa).

Belongs to the CutC family. As to quaternary structure, homodimer.

The protein resides in the cytoplasm. This chain is PF03932 family protein CutC, found in Salmonella paratyphi B (strain ATCC BAA-1250 / SPB7).